The chain runs to 427 residues: Enolase (427 aa).

Glutamine 163 provides a ligand contact to (2R)-2-phosphoglycerate. Catalysis depends on glutamate 205, which acts as the Proton donor. Aspartate 242, glutamate 285, and aspartate 312 together coordinate Mg(2+). The (2R)-2-phosphoglycerate site is built by lysine 337, arginine 366, serine 367, and lysine 388. Lysine 337 (proton acceptor) is an active-site residue.

Belongs to the enolase family. Mg(2+) is required as a cofactor.

The protein resides in the cytoplasm. It localises to the secreted. The protein localises to the cell surface. It catalyses the reaction (2R)-2-phosphoglycerate = phosphoenolpyruvate + H2O. It functions in the pathway carbohydrate degradation; glycolysis; pyruvate from D-glyceraldehyde 3-phosphate: step 4/5. Functionally, catalyzes the reversible conversion of 2-phosphoglycerate (2-PG) into phosphoenolpyruvate (PEP). It is essential for the degradation of carbohydrates via glycolysis. This chain is Enolase, found in Azorhizobium caulinodans (strain ATCC 43989 / DSM 5975 / JCM 20966 / LMG 6465 / NBRC 14845 / NCIMB 13405 / ORS 571).